We begin with the raw amino-acid sequence, 1149 residues long: Structural maintenance of chromosomes protein 6 homolog smc-6 (1149 aa).

77–84 (GPNGSGKS) provides a ligand contact to ATP. A coiled-coil region spans residues 309–460 (LQDETKKEYA…EEEKYTIQRD (152 aa)). The flexible hinge stretch occupies residues 461 to 687 (INQLRRKIEQ…DVDEGALARL (227 aa)). Residues 714–920 (YNERDQTKAA…AVDRATVGCD (207 aa)) adopt a coiled-coil conformation. 2 disordered regions span residues 875-900 (NDKK…STTE) and 1026-1060 (EVDE…VRDL). The segment covering 1026 to 1038 (EVDEHSYDDDSDD) has biased composition (acidic residues). Positions 1042–1058 (PRRKKSKKSGQKKKRVR) are enriched in basic residues.

It belongs to the SMC family. SMC6 subfamily. As to quaternary structure, interacts with smc-5. Expressed in the germline (at protein level).

It is found in the nucleus. The protein localises to the chromosome. Its function is as follows. Core component of the smc-5/smc-6 complex. Involved in DNA double-strand break repair by promoting sister-chromatid homologous recombination during meiosis. Also plays a role in the DNA damage repair of ultraviolet (UV) radiation-induced DNA lesions. Promotes efficient DNA replication. The polypeptide is Structural maintenance of chromosomes protein 6 homolog smc-6 (Caenorhabditis elegans).